We begin with the raw amino-acid sequence, 203 residues long: FMN-dependent NADH:quinone oxidoreductase 5 (203 aa).

Residues S9, 15–17 (SAS), 95–98 (MYNF), and 139–142 (TSGG) contribute to the FMN site.

The protein belongs to the azoreductase type 1 family. As to quaternary structure, homodimer. It depends on FMN as a cofactor.

The catalysed reaction is 2 a quinone + NADH + H(+) = 2 a 1,4-benzosemiquinone + NAD(+). It catalyses the reaction N,N-dimethyl-1,4-phenylenediamine + anthranilate + 2 NAD(+) = 2-(4-dimethylaminophenyl)diazenylbenzoate + 2 NADH + 2 H(+). Quinone reductase that provides resistance to thiol-specific stress caused by electrophilic quinones. Functionally, also exhibits azoreductase activity. Catalyzes the reductive cleavage of the azo bond in aromatic azo compounds to the corresponding amines. The polypeptide is FMN-dependent NADH:quinone oxidoreductase 5 (Pseudomonas fluorescens (strain ATCC BAA-477 / NRRL B-23932 / Pf-5)).